The primary structure comprises 401 residues: Phosphonopyruvate decarboxylase (401 aa).

The disordered stretch occupies residues 382–401; the sequence is WPASAVGSGTRAAAGSAGDR. Low complexity predominate over residues 384 to 401; the sequence is ASAVGSGTRAAAGSAGDR.

This sequence belongs to the TPP enzyme family. Requires thiamine diphosphate as cofactor. Mg(2+) is required as a cofactor.

The catalysed reaction is 3-phosphonopyruvate + H(+) = phosphonoacetaldehyde + CO2. The protein operates within secondary metabolite biosynthesis; bialaphos biosynthesis. Functionally, involved in the biosynthesis of phosphinothricin tripeptide (PTT), also known as bialaphos (BA), a natural-product antibiotic and potent herbicide. Catalyzes the decarboxylation of phosphonopyruvate (PnPy) to generate phosphonoacetaldehyde (PnAA). This Streptomyces hygroscopicus protein is Phosphonopyruvate decarboxylase.